The chain runs to 99 residues: Aspartyl/glutamyl-tRNA(Asn/Gln) amidotransferase subunit C (99 aa).

This sequence belongs to the GatC family. As to quaternary structure, heterotrimer of A, B and C subunits.

The enzyme catalyses L-glutamyl-tRNA(Gln) + L-glutamine + ATP + H2O = L-glutaminyl-tRNA(Gln) + L-glutamate + ADP + phosphate + H(+). It carries out the reaction L-aspartyl-tRNA(Asn) + L-glutamine + ATP + H2O = L-asparaginyl-tRNA(Asn) + L-glutamate + ADP + phosphate + 2 H(+). Allows the formation of correctly charged Asn-tRNA(Asn) or Gln-tRNA(Gln) through the transamidation of misacylated Asp-tRNA(Asn) or Glu-tRNA(Gln) in organisms which lack either or both of asparaginyl-tRNA or glutaminyl-tRNA synthetases. The reaction takes place in the presence of glutamine and ATP through an activated phospho-Asp-tRNA(Asn) or phospho-Glu-tRNA(Gln). This chain is Aspartyl/glutamyl-tRNA(Asn/Gln) amidotransferase subunit C, found in Kineococcus radiotolerans (strain ATCC BAA-149 / DSM 14245 / SRS30216).